Reading from the N-terminus, the 786-residue chain is LPS-assembly protein LptD (786 aa).

The N-terminal stretch at 1–39 (MPPKPLFPNVFPGDGAPRKRRLALALLAVPGLVPAVSYA) is a signal peptide. The segment at 767 to 786 (PGYTPLPPPPPPMSRFSNYE) is disordered. Positions 770-779 (TPLPPPPPPM) are enriched in pro residues.

It belongs to the LptD family. Component of the lipopolysaccharide transport and assembly complex. Interacts with LptE and LptA.

It is found in the cell outer membrane. Together with LptE, is involved in the assembly of lipopolysaccharide (LPS) at the surface of the outer membrane. The protein is LPS-assembly protein LptD of Burkholderia cenocepacia (strain HI2424).